The primary structure comprises 248 residues: 3-deoxy-manno-octulosonate cytidylyltransferase (248 aa).

This sequence belongs to the KdsB family.

Its subcellular location is the cytoplasm. It carries out the reaction 3-deoxy-alpha-D-manno-oct-2-ulosonate + CTP = CMP-3-deoxy-beta-D-manno-octulosonate + diphosphate. The protein operates within nucleotide-sugar biosynthesis; CMP-3-deoxy-D-manno-octulosonate biosynthesis; CMP-3-deoxy-D-manno-octulosonate from 3-deoxy-D-manno-octulosonate and CTP: step 1/1. It functions in the pathway bacterial outer membrane biogenesis; lipopolysaccharide biosynthesis. Functionally, activates KDO (a required 8-carbon sugar) for incorporation into bacterial lipopolysaccharide in Gram-negative bacteria. This Leptospira interrogans serogroup Icterohaemorrhagiae serovar copenhageni (strain Fiocruz L1-130) protein is 3-deoxy-manno-octulosonate cytidylyltransferase.